Reading from the N-terminus, the 594-residue chain is Actin-histidine N-methyltransferase (594 aa).

Residues 1–23 (MGKKSRVKTQKSGTGATASVSPK) are disordered. A compositionally biased stretch (polar residues) spans 10–23 (QKSGTGATASVSPK). S-adenosyl-L-methionine is bound by residues arginine 75, 104–106 (EGF), arginine 254, 275–279 (DMCNH), and 325–327 (SGF). One can recognise an SET domain in the interval 94–314 (EGFEMVSFKE…AGEQIYIFYG (221 aa)). Positions 553 to 594 (INGENSIPNGTRLEKEDLNQEQSKRVTEDAKEPSDSTEEVKE) are disordered. Residues 564-594 (RLEKEDLNQEQSKRVTEDAKEPSDSTEEVKE) show a composition bias toward basic and acidic residues.

It belongs to the class V-like SAM-binding methyltransferase superfamily. SETD3 actin-histidine methyltransferase family. Interacts with MYOD1. In terms of processing, phosphorylated by GSK3B, which is required for recognition by the SCF(FBXW7) complex and subsequent degradation. Ubiquitinated by the SCF(FBXW7) complex following phosphorylation by GSK3B, leading to its degradation by the proteasome.

It localises to the cytoplasm. The protein resides in the nucleus. The catalysed reaction is L-histidyl-[protein] + S-adenosyl-L-methionine = N(tele)-methyl-L-histidyl-[protein] + S-adenosyl-L-homocysteine + H(+). Its function is as follows. Protein-histidine N-methyltransferase that specifically mediates 3-methylhistidine (tele-methylhistidine) methylation of actin at 'His-73'. Histidine methylation of actin is required for smooth muscle contraction of the laboring uterus during delivery. Does not have protein-lysine N-methyltransferase activity and probably only catalyzes histidine methylation of actin. This is Actin-histidine N-methyltransferase from Rhinolophus ferrumequinum (Greater horseshoe bat).